The sequence spans 460 residues: ATP synthase subunit beta (460 aa).

150–157 is an ATP binding site; the sequence is GGAGVGKT.

This sequence belongs to the ATPase alpha/beta chains family. In terms of assembly, F-type ATPases have 2 components, CF(1) - the catalytic core - and CF(0) - the membrane proton channel. CF(1) has five subunits: alpha(3), beta(3), gamma(1), delta(1), epsilon(1). CF(0) has three main subunits: a(1), b(2) and c(9-12). The alpha and beta chains form an alternating ring which encloses part of the gamma chain. CF(1) is attached to CF(0) by a central stalk formed by the gamma and epsilon chains, while a peripheral stalk is formed by the delta and b chains.

The protein resides in the cell inner membrane. It catalyses the reaction ATP + H2O + 4 H(+)(in) = ADP + phosphate + 5 H(+)(out). Its function is as follows. Produces ATP from ADP in the presence of a proton gradient across the membrane. The catalytic sites are hosted primarily by the beta subunits. The chain is ATP synthase subunit beta from Salmonella paratyphi A (strain ATCC 9150 / SARB42).